Reading from the N-terminus, the 159-residue chain is Cyclic pyranopterin monophosphate synthase (159 aa).

Substrate is bound by residues 76 to 78 (LCH) and 114 to 115 (ME). Asp129 is a catalytic residue.

This sequence belongs to the MoaC family. As to quaternary structure, homohexamer; trimer of dimers.

It catalyses the reaction (8S)-3',8-cyclo-7,8-dihydroguanosine 5'-triphosphate = cyclic pyranopterin phosphate + diphosphate. It participates in cofactor biosynthesis; molybdopterin biosynthesis. Functionally, catalyzes the conversion of (8S)-3',8-cyclo-7,8-dihydroguanosine 5'-triphosphate to cyclic pyranopterin monophosphate (cPMP). The chain is Cyclic pyranopterin monophosphate synthase from Shewanella oneidensis (strain ATCC 700550 / JCM 31522 / CIP 106686 / LMG 19005 / NCIMB 14063 / MR-1).